Here is a 227-residue protein sequence, read N- to C-terminus: Uracil-DNA glycosylase (227 aa).

Asp64 functions as the Proton acceptor in the catalytic mechanism.

This sequence belongs to the uracil-DNA glycosylase (UDG) superfamily. UNG family.

The protein localises to the cytoplasm. The enzyme catalyses Hydrolyzes single-stranded DNA or mismatched double-stranded DNA and polynucleotides, releasing free uracil.. Functionally, excises uracil residues from the DNA which can arise as a result of misincorporation of dUMP residues by DNA polymerase or due to deamination of cytosine. This Serratia proteamaculans (strain 568) protein is Uracil-DNA glycosylase.